A 967-amino-acid chain; its full sequence is Leucine-rich repeat-containing G-protein coupled receptor 6 (967 aa).

A signal peptide spans 1–24 (MPSPPGLRALWLCAALCASRRAGG). Over 25 to 567 (APQPGPGPTA…LFESWGIRLA (543 aa)) the chain is Extracellular. One can recognise an LRRNT domain in the interval 26 to 66 (PQPGPGPTACPAPCHCQEDGIMLSADCSELGLSAVPGDLDP). Asn-77 carries an N-linked (GlcNAc...) asparagine glycan. LRR repeat units follow at residues 91 to 112 (FLEELRLSGNHLSHIPGQAFSG), 115 to 136 (SLKILMLQNNQLGGIPAEALWE), 139 to 160 (SLQSLRLDANLISLVPERSFEG), 163 to 186 (SLRHLWLDDNALTEIPVRALNNLP), 187 to 208 (ALQAMTLALNRISHIPDYAFQN), 211 to 232 (SLVVLHLHNNRIQHLGTHSFEG), 235 to 256 (NLETLDLNYNKLQEFPVAIRTL), 258 to 279 (RLQELGFHNNNIKAIPEKAFMG), 282 to 303 (LLQTIHFYDNPIQFVGRSAFQY), 306 to 328 (KLHTLSLNGAMDIQEFPDLKGTT), 329 to 350 (SLEILTLTRAGIRLLPSGMCQQ), 353 to 374 (RLRVLELSHNQIEELPSLHRCQ), 375 to 396 (KLEEIGLQHNRIWEIGADTFSQ), 399 to 420 (SLQALDLSWNAIRSIHPEAFST), and 423 to 443 (SLVKLDLTDNQLTTLPLAGLG). Residue Asn-208 is glycosylated (N-linked (GlcNAc...) asparagine). A helical membrane pass occupies residues 568–588 (VWAIVLLSVLCNGLVLLTVFA). Topologically, residues 589–598 (GGPVPLPPVK) are cytoplasmic. A helical transmembrane segment spans residues 599-619 (FVVGAIAGANTLTGISCGLLA). At 620-644 (SVDALTFGQFSEYGARWETGLGCRA) the chain is on the extracellular side. A disulfide bond links Cys-642 and Cys-717. Residues 645–665 (TGFLAVLGSEASVLLLTLAAV) traverse the membrane as a helical segment. The Cytoplasmic portion of the chain corresponds to 666–687 (QCSVSVSCVRAYGKSPSLGSVR). A helical membrane pass occupies residues 688–708 (AGVLGCLALAGLAAALPLASV). Over 709-727 (GEYGASPLCLPYAPPEGQP) the chain is Extracellular. The chain crosses the membrane as a helical span at residues 728 to 748 (AALGFTVALVMMNSFCFLVVA). Over 749–774 (GAYIKLYCDLPRGDFEAVWDCAMVRH) the chain is Cytoplasmic. The chain crosses the membrane as a helical span at residues 775 to 795 (VAWLIFADGLLYCPVAFLSFA). At 796–809 (SMLGLFPVTPEAVK) the chain is on the extracellular side. The helical transmembrane segment at 810–830 (SVLLVVLPLPACLNPLLYLLF) threads the bilayer. Topologically, residues 831-967 (NPHFRDDLRR…PSGLAFASHV (137 aa)) are cytoplasmic.

It belongs to the G-protein coupled receptor 1 family.

Its subcellular location is the cell membrane. Its function is as follows. Receptor for R-spondins that potentiates the canonical Wnt signaling pathway and acts as a marker of multipotent stem cells in the epidermis. Upon binding to R-spondins (RSPO1, RSPO2, RSPO3 or RSPO4), associates with phosphorylated LRP6 and frizzled receptors that are activated by extracellular Wnt receptors, triggering the canonical Wnt signaling pathway to increase expression of target genes. In contrast to classical G-protein coupled receptors, does not activate heterotrimeric G-proteins to transduce the signal. May act as a tumor suppressor. The polypeptide is Leucine-rich repeat-containing G-protein coupled receptor 6 (LGR6) (Homo sapiens (Human)).